Consider the following 178-residue polypeptide: Large ribosomal subunit protein eL20x (178 aa).

It belongs to the eukaryotic ribosomal protein eL20 family.

The sequence is that of Large ribosomal subunit protein eL20x (RPL18AC) from Arabidopsis thaliana (Mouse-ear cress).